Here is a 242-residue protein sequence, read N- to C-terminus: Zinc import ATP-binding protein ZnuC (242 aa).

The 218-residue stretch at 24 to 241 (INVKDLSFAY…EKFLKMFSSY (218 aa)) folds into the ABC transporter domain. 56–63 (GPNGGGKT) contributes to the ATP binding site.

It belongs to the ABC transporter superfamily. Zinc importer (TC 3.A.1.15.5) family. In terms of assembly, the complex is composed of two ATP-binding proteins (ZnuC), two transmembrane proteins (ZnuB) and a solute-binding protein (ZnuA).

It localises to the cell inner membrane. The catalysed reaction is Zn(2+)(out) + ATP(in) + H2O(in) = Zn(2+)(in) + ADP(in) + phosphate(in) + H(+)(in). Part of the ABC transporter complex ZnuABC involved in zinc import. Responsible for energy coupling to the transport system. This chain is Zinc import ATP-binding protein ZnuC, found in Ehrlichia ruminantium (strain Gardel).